A 759-amino-acid polypeptide reads, in one-letter code: Zinc finger protein 287 (759 aa).

Residues 42 to 124 (RRNFRNFPYP…ALVEDLTQIL (83 aa)) enclose the SCAN box domain. The segment at 127-154 (EEAPQSSALPQDTPEDDPNHDPNPASQA) is disordered. Residues 166 to 234 (VTFNDVAVDI…IKEIVEGPNP (69 aa)) form the KRAB domain. C2H2-type zinc fingers lie at residues 366–388 (YSCN…RENH), 394–416 (YECE…QRMH), 422–444 (YECH…QRIH), 450–472 (YKCE…QRTH), 478–500 (YKCL…QRVH), 506–528 (YICN…QKIH), 534–556 (YKCN…QRIH), 562–584 (YKCT…QTTH), 590–612 (YICN…HRTH), 618–640 (YKCS…QRIH), 646–668 (FKCN…QRVH), 674–696 (YKCH…RRTH), 702–724 (YKCS…QRIH), and 730–752 (YGCR…QRVH).

It belongs to the krueppel C2H2-type zinc-finger protein family. As to expression, expressed in brain and at low levels in kidney and spleen and few hematopoietic cell lines.

It is found in the nucleus. May be involved in transcriptional regulation. The sequence is that of Zinc finger protein 287 from Mus musculus (Mouse).